Consider the following 191-residue polypeptide: Pyridoxal 5'-phosphate synthase subunit PdxT (191 aa).

48–50 (GES) contributes to the L-glutamine binding site. The active-site Nucleophile is the cysteine 81. Residues arginine 109 and 136–137 (IR) contribute to the L-glutamine site. Residues histidine 172 and glutamate 174 each act as charge relay system in the active site.

Belongs to the glutaminase PdxT/SNO family. In the presence of PdxS, forms a dodecamer of heterodimers. Only shows activity in the heterodimer.

The enzyme catalyses aldehydo-D-ribose 5-phosphate + D-glyceraldehyde 3-phosphate + L-glutamine = pyridoxal 5'-phosphate + L-glutamate + phosphate + 3 H2O + H(+). It catalyses the reaction L-glutamine + H2O = L-glutamate + NH4(+). Its pathway is cofactor biosynthesis; pyridoxal 5'-phosphate biosynthesis. In terms of biological role, catalyzes the hydrolysis of glutamine to glutamate and ammonia as part of the biosynthesis of pyridoxal 5'-phosphate. The resulting ammonia molecule is channeled to the active site of PdxS. The chain is Pyridoxal 5'-phosphate synthase subunit PdxT from Thermus thermophilus (strain ATCC BAA-163 / DSM 7039 / HB27).